Consider the following 909-residue polypeptide: ABC transporter B family member 1 (909 aa).

The segment at 1-36 (MTKKNFNDEENESLLETYNKQQQKQSISTTNRSDQK) is disordered. Residues 14 to 36 (LLETYNKQQQKQSISTTNRSDQK) are compositionally biased toward polar residues. A helical transmembrane segment spans residues 85-105 (LFIQIVSLVILAGYLISINAL). Over residues 125-134 (TDSGSVSPTS) the composition is skewed to low complexity. The segment at 125–147 (TDSGSVSPTSTPSPTPTPTPSPT) is disordered. Positions 135 to 145 (TPSPTPTPTPS) are enriched in pro residues. A run of 8 helical transmembrane segments spans residues 182–202 (FSTF…LLLI), 206–226 (SFIY…YNVI), 275–295 (IIIV…VLHI), 347–367 (LPII…SLAM), 392–412 (LALV…SWLF), 480–500 (VILL…IVPV), 572–592 (GVFS…IVYV), and 607–627 (LTSF…ISSL). The region spanning 350-633 (ILAAMVALVF…ISSLMTDFLK (284 aa)) is the ABC transmembrane type-1 domain. An ABC transporter domain is found at 666 to 902 (IELKDVEFSY…TDGIYHNLVK (237 aa)). 701–708 (GPSGGGKS) is an ATP binding site.

This sequence belongs to the ABC transporter superfamily. ABCB family.

The protein resides in the membrane. The protein is ABC transporter B family member 1 (abcB1) of Dictyostelium discoideum (Social amoeba).